Here is a 486-residue protein sequence, read N- to C-terminus: Ribulose bisphosphate carboxylase large chain, chromosomal (486 aa).

Substrate contacts are provided by Asn-126 and Thr-176. The active-site Proton acceptor is the Lys-178. A substrate-binding site is contributed by Lys-180. Residues Lys-204, Asp-206, and Glu-207 each contribute to the Mg(2+) site. Position 204 is an N6-carboxylysine (Lys-204). His-296 functions as the Proton acceptor in the catalytic mechanism. Substrate is bound by residues Arg-297, His-329, and Ser-381.

The protein belongs to the RuBisCO large chain family. Type I subfamily. As to quaternary structure, heterohexadecamer of 8 large chains and 8 small chains; disulfide-linked. The disulfide link is formed within the large subunit homodimers. It depends on Mg(2+) as a cofactor. The disulfide bond which can form between Cys-278 in the large chain dimeric partners within the hexadecamer appears to be associated with oxidative stress and protein turnover.

The enzyme catalyses 2 (2R)-3-phosphoglycerate + 2 H(+) = D-ribulose 1,5-bisphosphate + CO2 + H2O. The catalysed reaction is D-ribulose 1,5-bisphosphate + O2 = 2-phosphoglycolate + (2R)-3-phosphoglycerate + 2 H(+). In terms of biological role, ruBisCO catalyzes two reactions: the carboxylation of D-ribulose 1,5-bisphosphate, the primary event in carbon dioxide fixation, as well as the oxidative fragmentation of the pentose substrate. Both reactions occur simultaneously and in competition at the same active site. The chain is Ribulose bisphosphate carboxylase large chain, chromosomal (cbbL1) from Cupriavidus necator (strain ATCC 17699 / DSM 428 / KCTC 22496 / NCIMB 10442 / H16 / Stanier 337) (Ralstonia eutropha).